Here is a 75-residue protein sequence, read N- to C-terminus: Protein Tlp homolog (75 aa).

Residues 48–75 (KNQRRREALDGMREEIKDEARDKKNGYM) are disordered.

Belongs to the Tlp family.

The sequence is that of Protein Tlp homolog from Clostridium botulinum (strain 657 / Type Ba4).